Here is a 215-residue protein sequence, read N- to C-terminus: Vesicle-trafficking protein SEC22b (215 aa).

Topologically, residues 2-194 (VLLTMIARVA…KYLNMRSTYA (193 aa)) are cytoplasmic. In terms of domain architecture, Longin spans 6–119 (MIARVADGLP…YSFIEFDTFI (114 aa)). Lys38 carries the post-translational modification N6-acetyllysine. The region spanning 134–194 (NLGSINTELQ…KYLNMRSTYA (61 aa)) is the v-SNARE coiled-coil homology domain. A Phosphoserine modification is found at Ser137. Thr140 bears the Phosphothreonine mark. Phosphoserine is present on residues Ser164, Ser168, Ser174, and Ser177. Residues 195 to 215 (KLAAVAVFFIMLIVYVRFWWL) traverse the membrane as a helical; Anchor for type IV membrane protein segment.

It belongs to the synaptobrevin family. Interacts with STX17. Component of two distinct SNARE complexes consisting of STX5, GOSR2/BOS1, BET1 and SEC22B or STX18, USE1L, BNIP1/SEC20L and SEC22B. YKT6 can probably replace SEC22B in either complex. Interacts with the COPII Sec23/24 complex composed of SEC23A and SEC24A; recruits SEC22B into COPII-coated vesicles to allow its transport from the endoplasmic reticulum to the Golgi. Interacts with BET1.

It localises to the endoplasmic reticulum membrane. The protein localises to the endoplasmic reticulum-Golgi intermediate compartment membrane. The protein resides in the golgi apparatus. Its subcellular location is the cis-Golgi network membrane. It is found in the trans-Golgi network membrane. It localises to the melanosome. SNARE involved in targeting and fusion of ER-derived transport vesicles with the Golgi complex as well as Golgi-derived retrograde transport vesicles with the ER. This is Vesicle-trafficking protein SEC22b (SEC22B) from Homo sapiens (Human).